Reading from the N-terminus, the 1128-residue chain is Nck-associated protein 1 (1128 aa).

The interval 640–665 (AVNKKSKKQTGKKGEPEREKPGVESM) is disordered. Basic and acidic residues predominate over residues 651-665 (KKGEPEREKPGVESM). Residues 995-1015 (IACLLMVFVAVSMPTLASNVM) traverse the membrane as a helical segment.

It belongs to the HEM-1/HEM-2 family.

Its subcellular location is the cell membrane. The protein resides in the cell projection. It localises to the lamellipodium membrane. In terms of biological role, part of the WAVE complex that regulates lamellipodia formation. The WAVE complex regulates actin filament reorganization via its interaction with the Arp2/3 complex. Actin remodeling activity is regulated by RAC1. Plays a role in neural tube closure. The protein is Nck-associated protein 1 (nckap1) of Danio rerio (Zebrafish).